A 93-amino-acid polypeptide reads, in one-letter code: Small ribosomal subunit protein uS19 (93 aa).

The protein belongs to the universal ribosomal protein uS19 family.

Its function is as follows. Protein S19 forms a complex with S13 that binds strongly to the 16S ribosomal RNA. The protein is Small ribosomal subunit protein uS19 of Ehrlichia canis (strain Jake).